A 287-amino-acid polypeptide reads, in one-letter code: 3-methyl-2-oxobutanoate hydroxymethyltransferase (287 aa).

Residues 1–19 (MSTLPKTLTLDTSTSRANP) are compositionally biased toward polar residues. The tract at residues 1-24 (MSTLPKTLTLDTSTSRANPTPQPM) is disordered. Mg(2+) contacts are provided by Asp66 and Asp105. Residues 66–67 (DS), Asp105, and Lys135 contribute to the 3-methyl-2-oxobutanoate site. Glu137 is a Mg(2+) binding site. The active-site Proton acceptor is the Glu204.

The protein belongs to the PanB family. Homodecamer; pentamer of dimers. It depends on Mg(2+) as a cofactor.

The protein resides in the cytoplasm. The enzyme catalyses 3-methyl-2-oxobutanoate + (6R)-5,10-methylene-5,6,7,8-tetrahydrofolate + H2O = 2-dehydropantoate + (6S)-5,6,7,8-tetrahydrofolate. Its pathway is cofactor biosynthesis; (R)-pantothenate biosynthesis; (R)-pantoate from 3-methyl-2-oxobutanoate: step 1/2. Its function is as follows. Catalyzes the reversible reaction in which hydroxymethyl group from 5,10-methylenetetrahydrofolate is transferred onto alpha-ketoisovalerate to form ketopantoate. The chain is 3-methyl-2-oxobutanoate hydroxymethyltransferase from Sphingopyxis alaskensis (strain DSM 13593 / LMG 18877 / RB2256) (Sphingomonas alaskensis).